The sequence spans 175 residues: Hypoxanthine-guanine phosphoribosyltransferase (175 aa).

Diphosphate contacts are provided by K40 and G41. Residues E96 and D97 each contribute to the Mg(2+) site. D100 (proton acceptor) is an active-site residue. GMP is bound by residues K128, 149–150, and D156; that span reads FL. Residue R162 participates in diphosphate binding.

The protein belongs to the purine/pyrimidine phosphoribosyltransferase family. The cofactor is Mg(2+).

The protein localises to the cytoplasm. The catalysed reaction is IMP + diphosphate = hypoxanthine + 5-phospho-alpha-D-ribose 1-diphosphate. It catalyses the reaction GMP + diphosphate = guanine + 5-phospho-alpha-D-ribose 1-diphosphate. It participates in purine metabolism; IMP biosynthesis via salvage pathway; IMP from hypoxanthine: step 1/1. Its pathway is purine metabolism; GMP biosynthesis via salvage pathway; GMP from guanine: step 1/1. Functionally, purine salvage pathway enzyme that catalyzes the transfer of the ribosyl-5-phosphate group from 5-phospho-alpha-D-ribose 1-diphosphate (PRPP) to the N9 position of the 6-oxopurines hypoxanthine and guanine to form the corresponding ribonucleotides IMP (inosine 5'-monophosphate) and GMP (guanosine 5'-monophosphate), with the release of PPi. The polypeptide is Hypoxanthine-guanine phosphoribosyltransferase (hpt) (Mycoplasma pneumoniae (strain ATCC 29342 / M129 / Subtype 1) (Mycoplasmoides pneumoniae)).